Consider the following 318-residue polypeptide: Pantothenate kinase (318 aa).

Residue 96 to 103 (GSVAVGKS) coordinates ATP.

Belongs to the prokaryotic pantothenate kinase family.

It is found in the cytoplasm. The enzyme catalyses (R)-pantothenate + ATP = (R)-4'-phosphopantothenate + ADP + H(+). It participates in cofactor biosynthesis; coenzyme A biosynthesis; CoA from (R)-pantothenate: step 1/5. This is Pantothenate kinase from Rhodopseudomonas palustris (strain ATCC BAA-98 / CGA009).